A 211-amino-acid polypeptide reads, in one-letter code: MRLFLWNAVLTLFVTSLIGALIPEPEVKIEVLQKPFICHRKTKGGDLMLVHYEGYLEKDGSLFHSTHKHNNGQPIWFTLGILEALKGWDQGLKGMCVGEKRKLIIPPALGYGKEGKGKIPPESTLIFNIDLLEIRNGPRSHESFQEMDLNDDWKLSKDEVKAYLKKEFEKHGAVVNESHHDALVEDIFDKEDEDKDGFISAREFTYKHDEL.

Positions 1–19 are cleaved as a signal peptide; the sequence is MRLFLWNAVLTLFVTSLIG. Cys38 and Cys96 are oxidised to a cystine. Positions 45 to 135 constitute a PPIase FKBP-type domain; that stretch reads GDLMLVHYEG…IFNIDLLEIR (91 aa). Residues 135 to 170 enclose the EF-hand 1 domain; the sequence is RNGPRSHESFQEMDLNDDWKLSKDEVKAYLKKEFEK. Positions 148, 150, 152, 154, and 159 each coordinate Ca(2+). A glycan (N-linked (GlcNAc...) asparagine) is linked at Asn176. The EF-hand 2 domain maps to 179 to 211; sequence HHDALVEDIFDKEDEDKDGFISAREFTYKHDEL. Residues Asp192, Asp194, Asp196, Phe198, and Glu203 each contribute to the Ca(2+) site. Positions 208 to 211 match the Prevents secretion from ER motif; it reads HDEL.

As to quaternary structure, monomer. Homodimer. Interacts with type III, type IV and type X collagens.

The protein resides in the endoplasmic reticulum lumen. It catalyses the reaction [protein]-peptidylproline (omega=180) = [protein]-peptidylproline (omega=0). Inhibited by tacrolimus/FK506. Functionally, PPIase which accelerates the folding of proteins during protein synthesis. Has a preference for substrates containing 4-hydroxylproline modifications, including type III collagen. May also target type VI and type X collagens. This Homo sapiens (Human) protein is Peptidyl-prolyl cis-trans isomerase FKBP14 (FKBP14).